Consider the following 932-residue polypeptide: MERYDIVRIIGKGGMGEVYLAYDPVCSRKVALKKIREDLAENPLLKRRFLREARIAADLIHPGVVPVYTIYSEKDPVYYTMPYIEGYTLKTLLKSVWQKESLSKELAEKTSVGAFLSIFHKICCTIEYVHSRGILHRDLKPDNILLGLFSEAVILDWGAAVACGEEEDLLDIDVSKEEVLSSRMTIPGRIVGTPDYMAPERLLGHPASKSTDIYALGVVLYQMLTLSFPYRRKKGKKIVLDGQRIPSPQEVAPYREIPPFLSAVVMRMLAVDPQERYSSVTELKEDIESHLKGSPKWTLTTALPPKKSSSWKLNEPILLSKYFPMLEVSPASWYSLAISNIESFSEMRLEYTLSKKGLNEGFGILLPTSENALGGDFYQGYGFWLHIKERTLSVSLVKNSLEIQRCSQDLESDKETFLIALEQHNHSLSLFVDGTTWLIHMNYLPSRSGRVAIIVRDMEDILEDIGIFESSGSLRVSCLAVPDAFLAEKLYDRALVLYRRIAESFPGRKEGYEARFRAGITVLEKASTDNNEQEFALAIEEFSKLHDGVAAPLEYLGKALVYQRLQEYNEEIKSLLLALKRYSQHPEIFRLKDHVVYRLHESFYKRDRLALVFMILVLEIAPQAITPGQEEKILVWLKDKSRATLFCLLDPTVLELRSSKMELFLSYWSGFIPHLNSLFHRAWDQSDVRALIEIFYVACDLHKWQFLSSCIDIFKESLEDQKATEEIVEFSFEDLGAFLFAIQSIFNKEDAEKIFVSNDQLSPILLVYIFDLFANRALLESQGEAIFQALDLIRSKVPENFYHDYLRNHEIRAHLWCRNEKALSTIFENYTEKQLKDEQHELFVLYGCYLALIQGAEAAKQHFDVCREDRIFPASLLARNYNRLGLPKDALSYQERRLLLRQKFLYFHCLGNHDERDLCQTMYHLLTEEFQL.

One can recognise a Protein kinase domain in the interval 4-291 (YDIVRIIGKG…ELKEDIESHL (288 aa)). Residues 10–18 (IGKGGMGEV) and Lys33 each bind ATP. The active-site Proton acceptor is Asp138.

Belongs to the protein kinase superfamily. Ser/Thr protein kinase family. Post-translationally, autophosphorylated on serine and threonine residues.

The enzyme catalyses L-seryl-[protein] + ATP = O-phospho-L-seryl-[protein] + ADP + H(+). It carries out the reaction L-threonyl-[protein] + ATP = O-phospho-L-threonyl-[protein] + ADP + H(+). In terms of biological role, together with the serine/threonine kinase Pkn1, may play a role in the specific interactions with host proteins during intracellular growth. The protein is Serine/threonine-protein kinase PknD of Chlamydia pneumoniae (Chlamydophila pneumoniae).